The primary structure comprises 345 residues: Uroporphyrinogen decarboxylase (345 aa).

Substrate contacts are provided by residues 27–31, phenylalanine 46, aspartate 76, tyrosine 152, serine 207, and histidine 320; that span reads RQAGR.

Belongs to the uroporphyrinogen decarboxylase family. Homodimer.

The protein localises to the cytoplasm. The enzyme catalyses uroporphyrinogen III + 4 H(+) = coproporphyrinogen III + 4 CO2. It participates in porphyrin-containing compound metabolism; protoporphyrin-IX biosynthesis; coproporphyrinogen-III from 5-aminolevulinate: step 4/4. Catalyzes the decarboxylation of four acetate groups of uroporphyrinogen-III to yield coproporphyrinogen-III. This chain is Uroporphyrinogen decarboxylase, found in Oceanobacillus iheyensis (strain DSM 14371 / CIP 107618 / JCM 11309 / KCTC 3954 / HTE831).